Reading from the N-terminus, the 321-residue chain is MQIKDEILALLKKGKNLLAFSYGSDSSALFYLLMQEKIDFDLVMINYKTRKNSDLEELKAKELALKFHKKIFIKHAPKFQSNFEKKARDFRYDFFEKICLEQDYDHLILAHHLNDQFEWFLMQLSRGAGLAEILGMQECEKRQNYTLLRPLLFISKDEISSFLKEKDIFYFHDESNENEKYFRNYIRKNFSNAFVSEFHQGLKRSFSYLDEDRKKLYDFENIKEIQGLLICPKNESLIARAVKMKGLLLSTAQRKELLKGDCVLGGKIALAYKNEQAIVFEYETCQKLPKNFKEECRIAKIPRLLRAYLYNHKIDISSLSF.

21–26 (SYGSDS) contacts ATP.

This sequence belongs to the tRNA(Ile)-lysidine synthase family.

It is found in the cytoplasm. The catalysed reaction is cytidine(34) in tRNA(Ile2) + L-lysine + ATP = lysidine(34) in tRNA(Ile2) + AMP + diphosphate + H(+). Its function is as follows. Ligates lysine onto the cytidine present at position 34 of the AUA codon-specific tRNA(Ile) that contains the anticodon CAU, in an ATP-dependent manner. Cytidine is converted to lysidine, thus changing the amino acid specificity of the tRNA from methionine to isoleucine. The protein is tRNA(Ile)-lysidine synthase of Campylobacter jejuni (strain RM1221).